Here is a 142-residue protein sequence, read N- to C-terminus: Hemoglobin subunit alpha-4 (142 aa).

A Globin domain is found at 2–142 (VLSAADKSNV…VSTVLTSKYR (141 aa)). H59 serves as a coordination point for O2. Residue H88 participates in heme b binding.

It belongs to the globin family. In terms of assembly, heterotetramer of two alpha chains and two beta chains. As to expression, red blood cells.

In terms of biological role, involved in oxygen transport from the lung to the various peripheral tissues. This is Hemoglobin subunit alpha-4 from Bubalus bubalis (Domestic water buffalo).